The following is a 351-amino-acid chain: Probable aldo-keto reductase 2 (351 aa).

The active-site Proton donor is the tyrosine 67. Position 134 (histidine 134) interacts with substrate. NADP(+) is bound at residue 213 to 223 (SPLGRGFFSAG). The tract at residues 317–351 (YASTDDVRGDRYPQAMANTTWQNSETPPLSSWKAQ) is disordered. The segment covering 332 to 351 (MANTTWQNSETPPLSSWKAQ) has biased composition (polar residues).

It belongs to the aldo/keto reductase family.

The protein is Probable aldo-keto reductase 2 of Oryza sativa subsp. japonica (Rice).